Here is a 579-residue protein sequence, read N- to C-terminus: Putative ABC transporter ATP-binding protein VPA1482 (579 aa).

ABC transporter domains are found at residues 3-244 and 299-533; these read IEFS…GIRE and LEVR…ANLT. ATP is bound by residues 37–44 and 332–339; these read GPSGSGKS and GKNGSGKS.

This sequence belongs to the ABC transporter superfamily.

The protein resides in the cell inner membrane. Probably part of an ABC transporter complex. Responsible for energy coupling to the transport system. The chain is Putative ABC transporter ATP-binding protein VPA1482 from Vibrio parahaemolyticus serotype O3:K6 (strain RIMD 2210633).